The chain runs to 345 residues: NADH-ubiquinone oxidoreductase chain 2 (345 aa).

The next 9 helical transmembrane spans lie at 1–21, 25–45, 60–80, 113–133, 148–168, 191–211, 239–259, 274–294, and 324–344; these read MNPI…ILAM, HWVY…PIIS, FLIQ…NAYL, FWLP…IATW, LIPT…GGLG, VIII…YMIF, IITS…PMSG, HLTP…MFYL, and SSLS…PLLI.

Belongs to the complex I subunit 2 family.

The protein resides in the mitochondrion inner membrane. It catalyses the reaction a ubiquinone + NADH + 5 H(+)(in) = a ubiquinol + NAD(+) + 4 H(+)(out). In terms of biological role, core subunit of the mitochondrial membrane respiratory chain NADH dehydrogenase (Complex I) that is believed to belong to the minimal assembly required for catalysis. Complex I functions in the transfer of electrons from NADH to the respiratory chain. The immediate electron acceptor for the enzyme is believed to be ubiquinone. This is NADH-ubiquinone oxidoreductase chain 2 (MT-ND2) from Varanus baritji (Black-spotted ridge-tailed monitor).